Reading from the N-terminus, the 427-residue chain is 3-phosphoshikimate 1-carboxyvinyltransferase (427 aa).

3-phosphoshikimate is bound by residues Lys21, Ser22, and Arg26. Lys21 provides a ligand contact to phosphoenolpyruvate. Residues Gly93 and Arg121 each contribute to the phosphoenolpyruvate site. Positions 166, 168, 314, and 341 each coordinate 3-phosphoshikimate. Gln168 lines the phosphoenolpyruvate pocket. Asp314 (proton acceptor) is an active-site residue. Phosphoenolpyruvate contacts are provided by Arg345 and Arg387.

The protein belongs to the EPSP synthase family. As to quaternary structure, monomer.

Its subcellular location is the cytoplasm. The enzyme catalyses 3-phosphoshikimate + phosphoenolpyruvate = 5-O-(1-carboxyvinyl)-3-phosphoshikimate + phosphate. Its pathway is metabolic intermediate biosynthesis; chorismate biosynthesis; chorismate from D-erythrose 4-phosphate and phosphoenolpyruvate: step 6/7. In terms of biological role, catalyzes the transfer of the enolpyruvyl moiety of phosphoenolpyruvate (PEP) to the 5-hydroxyl of shikimate-3-phosphate (S3P) to produce enolpyruvyl shikimate-3-phosphate and inorganic phosphate. In Alkaliphilus oremlandii (strain OhILAs) (Clostridium oremlandii (strain OhILAs)), this protein is 3-phosphoshikimate 1-carboxyvinyltransferase.